The sequence spans 129 residues: NADPH-dependent 7-cyano-7-deazaguanine reductase (129 aa).

Residue cysteine 34 is the Thioimide intermediate of the active site. Aspartate 41 functions as the Proton donor in the catalytic mechanism. Substrate-binding positions include 56–58 and 75–76; these read VEL and HE.

This sequence belongs to the GTP cyclohydrolase I family. QueF type 1 subfamily.

Its subcellular location is the cytoplasm. It catalyses the reaction 7-aminomethyl-7-carbaguanine + 2 NADP(+) = 7-cyano-7-deazaguanine + 2 NADPH + 3 H(+). It participates in tRNA modification; tRNA-queuosine biosynthesis. Catalyzes the NADPH-dependent reduction of 7-cyano-7-deazaguanine (preQ0) to 7-aminomethyl-7-deazaguanine (preQ1). The chain is NADPH-dependent 7-cyano-7-deazaguanine reductase from Alkalilimnicola ehrlichii (strain ATCC BAA-1101 / DSM 17681 / MLHE-1).